The primary structure comprises 326 residues: Glycine N(alpha)-acyltransferase (326 aa).

This sequence belongs to the acetyltransferase family.

It carries out the reaction a (3R)-hydroxyacyl-[ACP] + glycine = a lyso-glycine lipid + holo-[ACP] + H(+). The enzyme catalyses (3R)-hydroxyhexadecanoyl-[ACP] + glycine = N-[(3R)-3-hydroxyhexadecanoyl]-glycine + holo-[ACP] + H(+). It participates in lipid metabolism. Functionally, is involved in the production of glycine lipids (GL), which are phosphorus-free membrane lipids. Catalyzes the first step of GL biosynthesis, i.e. the N-acylation of glycine via addition of a 3-hydroxy fatty acyl group, to form a range of monoacylated glycine (also named lyso-glycine lipids or lyso-GL). As an example, catalyzes the production of commendamide, an N-acylated (3-OH C16:0) derivative of glycine with hemolytic activity and the ability to solubilize cholesterol micelles; this compound can also activate NF-kB through the G-protein coupled receptor GPCR G2A/132. The sequence is that of Glycine N(alpha)-acyltransferase from Phocaeicola vulgatus (strain ATCC 8482 / DSM 1447 / JCM 5826 / CCUG 4940 / NBRC 14291 / NCTC 11154) (Bacteroides vulgatus).